The sequence spans 241 residues: Large ribosomal subunit protein bL25 (241 aa).

The disordered stretch occupies residues 214 to 241 (LDAVKAGEEGSRAQQETEEASERADQGQ).

The protein belongs to the bacterial ribosomal protein bL25 family. CTC subfamily. In terms of assembly, part of the 50S ribosomal subunit; part of the 5S rRNA/L5/L18/L25 subcomplex. Contacts the 5S rRNA. Binds to the 5S rRNA independently of L5 and L18.

This is one of the proteins that binds to the 5S RNA in the ribosome where it forms part of the central protuberance. The sequence is that of Large ribosomal subunit protein bL25 from Deinococcus geothermalis (strain DSM 11300 / CIP 105573 / AG-3a).